The following is a 141-amino-acid chain: Organic hydroperoxide resistance protein-like 1 (141 aa).

Residues 1-20 (MAVNYETKATNTGGRNGHVQ) form a disordered region.

This sequence belongs to the OsmC/Ohr family.

The sequence is that of Organic hydroperoxide resistance protein-like 1 from Staphylococcus saprophyticus subsp. saprophyticus (strain ATCC 15305 / DSM 20229 / NCIMB 8711 / NCTC 7292 / S-41).